The primary structure comprises 366 residues: UDP-N-acetylglucosamine--N-acetylmuramyl-(pentapeptide) pyrophosphoryl-undecaprenol N-acetylglucosamine transferase (366 aa).

Residues 22-24 (TGG), N134, R170, S198, I253, and Q298 contribute to the UDP-N-acetyl-alpha-D-glucosamine site.

The protein belongs to the glycosyltransferase 28 family. MurG subfamily.

The protein localises to the cell inner membrane. It catalyses the reaction di-trans,octa-cis-undecaprenyl diphospho-N-acetyl-alpha-D-muramoyl-L-alanyl-D-glutamyl-meso-2,6-diaminopimeloyl-D-alanyl-D-alanine + UDP-N-acetyl-alpha-D-glucosamine = di-trans,octa-cis-undecaprenyl diphospho-[N-acetyl-alpha-D-glucosaminyl-(1-&gt;4)]-N-acetyl-alpha-D-muramoyl-L-alanyl-D-glutamyl-meso-2,6-diaminopimeloyl-D-alanyl-D-alanine + UDP + H(+). The protein operates within cell wall biogenesis; peptidoglycan biosynthesis. Functionally, cell wall formation. Catalyzes the transfer of a GlcNAc subunit on undecaprenyl-pyrophosphoryl-MurNAc-pentapeptide (lipid intermediate I) to form undecaprenyl-pyrophosphoryl-MurNAc-(pentapeptide)GlcNAc (lipid intermediate II). This chain is UDP-N-acetylglucosamine--N-acetylmuramyl-(pentapeptide) pyrophosphoryl-undecaprenol N-acetylglucosamine transferase, found in Xylella fastidiosa (strain M12).